Reading from the N-terminus, the 402-residue chain is Nicotinate phosphoribosyltransferase (402 aa).

The residue at position 224 (His-224) is a Phosphohistidine; by autocatalysis.

It belongs to the NAPRTase family. In terms of processing, transiently phosphorylated on a His residue during the reaction cycle. Phosphorylation strongly increases the affinity for substrates and increases the rate of nicotinate D-ribonucleotide production. Dephosphorylation regenerates the low-affinity form of the enzyme, leading to product release.

It catalyses the reaction nicotinate + 5-phospho-alpha-D-ribose 1-diphosphate + ATP + H2O = nicotinate beta-D-ribonucleotide + ADP + phosphate + diphosphate. Its pathway is cofactor biosynthesis; NAD(+) biosynthesis; nicotinate D-ribonucleotide from nicotinate: step 1/1. Catalyzes the synthesis of beta-nicotinate D-ribonucleotide from nicotinate and 5-phospho-D-ribose 1-phosphate at the expense of ATP. This chain is Nicotinate phosphoribosyltransferase, found in Neisseria meningitidis serogroup B (strain ATCC BAA-335 / MC58).